Here is a 313-residue protein sequence, read N- to C-terminus: Porphobilinogen deaminase (313 aa).

Residue cysteine 242 is modified to S-(dipyrrolylmethanemethyl)cysteine.

This sequence belongs to the HMBS family. In terms of assembly, monomer. Requires dipyrromethane as cofactor.

It carries out the reaction 4 porphobilinogen + H2O = hydroxymethylbilane + 4 NH4(+). The protein operates within porphyrin-containing compound metabolism; protoporphyrin-IX biosynthesis; coproporphyrinogen-III from 5-aminolevulinate: step 2/4. In terms of biological role, tetrapolymerization of the monopyrrole PBG into the hydroxymethylbilane pre-uroporphyrinogen in several discrete steps. The chain is Porphobilinogen deaminase from Erwinia tasmaniensis (strain DSM 17950 / CFBP 7177 / CIP 109463 / NCPPB 4357 / Et1/99).